Here is a 75-residue protein sequence, read N- to C-terminus: Penaeidin-3l (75 aa).

Residues 1 to 19 form the signal peptide; sequence MRLVVCLVFLASFALVCQG. Pyrrolidone carboxylic acid is present on Gln-20. Disulfide bonds link Cys-44–Cys-59, Cys-48–Cys-66, and Cys-60–Cys-67. Position 74 is a serine amide (Ser-74).

Belongs to the penaeidin family.

The protein resides in the cytoplasmic granule. In terms of biological role, antibacterial and antifungal activity. Presents chitin-binding activity. This is Penaeidin-3l from Penaeus setiferus (Atlantic white shrimp).